The following is a 370-amino-acid chain: tRNA-specific 2-thiouridylase MnmA (370 aa).

Residues 11 to 18 and Met37 contribute to the ATP site; that span reads GMSGGVDS. The interval 97–99 is interaction with target base in tRNA; that stretch reads NPD. Cys102 serves as the catalytic Nucleophile. Cysteines 102 and 199 form a disulfide. Gly126 lines the ATP pocket. The segment at 149-151 is interaction with tRNA; that stretch reads KDQ. The active-site Cysteine persulfide intermediate is the Cys199. Residues 307–308 are interaction with tRNA; sequence RY.

It belongs to the MnmA/TRMU family.

The protein resides in the cytoplasm. It catalyses the reaction S-sulfanyl-L-cysteinyl-[protein] + uridine(34) in tRNA + AH2 + ATP = 2-thiouridine(34) in tRNA + L-cysteinyl-[protein] + A + AMP + diphosphate + H(+). Its function is as follows. Catalyzes the 2-thiolation of uridine at the wobble position (U34) of tRNA, leading to the formation of s(2)U34. The polypeptide is tRNA-specific 2-thiouridylase MnmA (Staphylococcus carnosus (strain TM300)).